Consider the following 491-residue polypeptide: Probable Xaa-Pro aminopeptidase An01g13040 (491 aa).

Mn(2+)-binding residues include Asp-276, Asp-287, Glu-420, and Glu-459.

It belongs to the peptidase M24B family. Mn(2+) is required as a cofactor.

It carries out the reaction Release of any N-terminal amino acid, including proline, that is linked to proline, even from a dipeptide or tripeptide.. Its function is as follows. Catalyzes the removal of a penultimate prolyl residue from the N-termini of peptides. This chain is Probable Xaa-Pro aminopeptidase An01g13040, found in Aspergillus niger (strain ATCC MYA-4892 / CBS 513.88 / FGSC A1513).